Reading from the N-terminus, the 155-residue chain is Interleukin-2 (155 aa).

Residues 1–20 (MYKIQLLSCIALTLALVANG) form the signal peptide. An O-linked (GalNAc...) threonine glycan is attached at Thr23. Cys79 and Cys127 are disulfide-bonded.

The protein belongs to the IL-2 family.

Its subcellular location is the secreted. Functionally, cytokine produced by activated CD4-positive helper T-cells and to a lesser extend activated CD8-positive T-cells and natural killer (NK) cells that plays pivotal roles in the immune response and tolerance. Binds to a receptor complex composed of either the high-affinity trimeric IL-2R (IL2RA/CD25, IL2RB/CD122 and IL2RG/CD132) or the low-affinity dimeric IL-2R (IL2RB and IL2RG). Interaction with the receptor leads to oligomerization and conformation changes in the IL-2R subunits resulting in downstream signaling starting with phosphorylation of JAK1 and JAK3. In turn, JAK1 and JAK3 phosphorylate the receptor to form a docking site leading to the phosphorylation of several substrates including STAT5. This process leads to activation of several pathways including STAT, phosphoinositide-3-kinase/PI3K and mitogen-activated protein kinase/MAPK pathways. Functions as a T-cell growth factor and can increase NK-cell cytolytic activity as well. Promotes strong proliferation of activated B-cells and subsequently immunoglobulin production. Plays a pivotal role in regulating the adaptive immune system by controlling the survival and proliferation of regulatory T-cells, which are required for the maintenance of immune tolerance. Moreover, participates in the differentiation and homeostasis of effector T-cell subsets, including Th1, Th2, Th17 as well as memory CD8-positive T-cells. This is Interleukin-2 (IL2) from Moschus berezovskii (Chinese forest musk deer).